Here is a 168-residue protein sequence, read N- to C-terminus: Cilia- and flagella-associated protein HOATZ (168 aa).

A disordered region spans residues 142–168; sequence PKDKVPKSKEVLSESGLRDQEEVKALE.

The protein belongs to the HOATZ family. Specifically expressed in tissues with motile cilia and flagella, such as brain ependyma, lung, testis, and oviduct but not in whole brain, liver,kidney, spleen, and eyeball.

The protein localises to the cytoplasm. Its subcellular location is the cell projection. The protein resides in the cilium. Functionally, required for motile ciliogenesis and flagellar genesis by mediating the maturation of the glycolytic enzyme ENO4. This chain is Cilia- and flagella-associated protein HOATZ, found in Mus musculus (Mouse).